A 147-amino-acid chain; its full sequence is Ribosome maturation factor RimP (147 aa).

Belongs to the RimP family.

Its subcellular location is the cytoplasm. Its function is as follows. Required for maturation of 30S ribosomal subunits. The sequence is that of Ribosome maturation factor RimP from Sulfurihydrogenibium sp. (strain YO3AOP1).